The sequence spans 648 residues: Probable alpha-galactosidase D (648 aa).

The first 17 residues, Met-1–Gly-17, serve as a signal peptide directing secretion. N-linked (GlcNAc...) asparagine glycans are attached at residues Asn-84 and Asn-90. The cysteines at positions 123 and 156 are disulfide-linked. Asp-154 serves as the catalytic Nucleophile. Glu-199 to Asp-203 serves as a coordination point for substrate. Asp-221 serves as the catalytic Proton donor. Residues Asn-339, Asn-505, and Asn-572 are each glycosylated (N-linked (GlcNAc...) asparagine).

Belongs to the glycosyl hydrolase 27 family.

The protein resides in the secreted. It catalyses the reaction Hydrolysis of terminal, non-reducing alpha-D-galactose residues in alpha-D-galactosides, including galactose oligosaccharides, galactomannans and galactolipids.. Its function is as follows. Hydrolyzes a variety of simple alpha-D-galactoside as well as more complex molecules such as oligosaccharides and polysaccharides. The sequence is that of Probable alpha-galactosidase D (aglD) from Neosartorya fischeri (strain ATCC 1020 / DSM 3700 / CBS 544.65 / FGSC A1164 / JCM 1740 / NRRL 181 / WB 181) (Aspergillus fischerianus).